The chain runs to 62 residues: DNA-directed RNA polymerase subunit Rpo10 (62 aa).

Zn(2+) contacts are provided by cysteine 6, cysteine 9, cysteine 43, and cysteine 44.

This sequence belongs to the archaeal Rpo10/eukaryotic RPB10 RNA polymerase subunit family. As to quaternary structure, part of the RNA polymerase complex. It depends on Zn(2+) as a cofactor.

It localises to the cytoplasm. It carries out the reaction RNA(n) + a ribonucleoside 5'-triphosphate = RNA(n+1) + diphosphate. Functionally, DNA-dependent RNA polymerase (RNAP) catalyzes the transcription of DNA into RNA using the four ribonucleoside triphosphates as substrates. This chain is DNA-directed RNA polymerase subunit Rpo10, found in Methanosarcina barkeri (strain Fusaro / DSM 804).